Consider the following 406-residue polypeptide: Nicotinate phosphoribosyltransferase (406 aa).

The residue at position 227 (histidine 227) is a Phosphohistidine; by autocatalysis.

The protein belongs to the NAPRTase family. Post-translationally, transiently phosphorylated on a His residue during the reaction cycle. Phosphorylation strongly increases the affinity for substrates and increases the rate of nicotinate D-ribonucleotide production. Dephosphorylation regenerates the low-affinity form of the enzyme, leading to product release.

The enzyme catalyses nicotinate + 5-phospho-alpha-D-ribose 1-diphosphate + ATP + H2O = nicotinate beta-D-ribonucleotide + ADP + phosphate + diphosphate. It functions in the pathway cofactor biosynthesis; NAD(+) biosynthesis; nicotinate D-ribonucleotide from nicotinate: step 1/1. Its function is as follows. Catalyzes the synthesis of beta-nicotinate D-ribonucleotide from nicotinate and 5-phospho-D-ribose 1-phosphate at the expense of ATP. This Methanosarcina mazei (strain ATCC BAA-159 / DSM 3647 / Goe1 / Go1 / JCM 11833 / OCM 88) (Methanosarcina frisia) protein is Nicotinate phosphoribosyltransferase.